The following is a 172-amino-acid chain: Adenine phosphoribosyltransferase (172 aa).

It belongs to the purine/pyrimidine phosphoribosyltransferase family. Homodimer.

The protein localises to the cytoplasm. It carries out the reaction AMP + diphosphate = 5-phospho-alpha-D-ribose 1-diphosphate + adenine. The protein operates within purine metabolism; AMP biosynthesis via salvage pathway; AMP from adenine: step 1/1. Catalyzes a salvage reaction resulting in the formation of AMP, that is energically less costly than de novo synthesis. The polypeptide is Adenine phosphoribosyltransferase (Streptococcus thermophilus (strain ATCC BAA-250 / LMG 18311)).